The primary structure comprises 477 residues: Regulator of G-protein signaling 7 (477 aa).

The DEP domain occupies 37-112; that stretch reads EKNGIPIRTV…DDGTFYRFQT (76 aa). 2 positions are modified to phosphoserine: Ser-229 and Ser-241. Positions 236–257 are disordered; it reads DIRSHSPTHTPTPETKPPTEDE. Thr-243 bears the Phosphothreonine mark. In terms of domain architecture, G protein gamma spans 255–316; the sequence is EDELHRQIKY…LSDDTTFWEL (62 aa). In terms of domain architecture, RGS spans 333-448; the sequence is GMDEALKDPV…IRSSAYQELL (116 aa). At Ser-434 the chain carries Phosphoserine.

As to quaternary structure, interacts with GNB5, forming the RGS7-GNB5 complex. Interacts with GPR158; promotes the GTPase activator activity of the RGS7-GNB5 complex in absence of glycine, in contrast GTPase activator activity of the RGS7-GNB5 complex is inhibited in presence of glycine. Interacts with GPR179. Interacts with PKD1; this prevents rapid proteasomal degradation. Interacts with RGS7BP, leading to regulate the subcellular location of the heterodimer formed with GNB5. Interacts (phosphorylated form) with 14-3-3 protein YWHAQ. Interacts with SNAPIN. Interacts with GNAI1. Interacts with GNAO1, GNAI3 and GNAZ. Palmitoylated. In terms of processing, ubiquitinated, leading to rapid proteasomal degradation. Post-translationally, phosphorylation and subsequent interaction with 14-3-3 proteins inhibits GAP activity. Brain-specific. Predominantly cerebellar granule cells.

It is found in the cytoplasm. Its subcellular location is the cytosol. It localises to the cell membrane. The protein localises to the membrane. In terms of biological role, GTPase activator component of the RGS7-GNB5 complex that regulates G protein-coupled receptor signaling cascades. The RGS7-GNB5 complex acts as an inhibitor signal transduction by promoting the GTPase activity of G protein alpha subunits, such as GNAO1, thereby driving them into their inactive GDP-bound form. May play a role in synaptic vesicle exocytosis. Glycine-dependent regulation of the RGS7-GNB5 complex by GPR158 affects mood and cognition via its ability to regulate neuronal excitability in L2/L3 pyramidal neurons of the prefrontal cortex. Modulates the activity of potassium channels that are activated by GNAO1 in response to muscarinic acetylcholine receptor M2/CHRM2 signaling. The protein is Regulator of G-protein signaling 7 (Rgs7) of Rattus norvegicus (Rat).